The sequence spans 469 residues: MNPNQKIITIGSICMVVGIISLILQIGNIISIWISHSIQTGSQNHTGTCNQSIITYKNSTWVNQTYVNISNTNVVAGKDTTSVILAGNSSLCPIRGWAIYSKDNGVRIGSKGDVFVIREPFISCSHLECRTFFLTQGALLNDKHSNGTVKDRSPYRALMSCPVGEAPSPYNSRFESVAWSASACHDGMGWLTIGISGPDDGAVAVLKYNGIITETIKSWRKEILRTQESECACVNGSCFTIMTDGPSGGPASYKIFKIEKGKVTKSIELDAPNSHYEECSCYPDTGKVMCVCRDNWHGSNRPWVSFDQNLDYQMGYICSGVFGDNPRPKDGKGNCGPVYVDGANGVKGFSYRYGNGVWIGRTKSNSSRQGFEMIWDPNGWTETDSNFFVKQDVVAVTDWSGYSGSFVQHPELTGLDCMRPCFWVELIRGRPKEKTIWTSGSSISFCGVNSDTVDWSWPDGAELPFTIDK.

At methionine 1–lysine 6 the chain is on the intravirion side. A helical membrane pass occupies residues isoleucine 7–glycine 27. An involved in apical transport and lipid raft association region spans residues glycine 11–tryptophan 33. Residues asparagine 28–lysine 469 lie on the Virion surface side of the membrane. The interval histidine 36–serine 90 is hypervariable stalk region. Residues asparagine 44, asparagine 50, asparagine 58, asparagine 63, asparagine 68, and asparagine 88 are each glycosylated (N-linked (GlcNAc...) asparagine; by host). Positions leucine 91–lysine 469 are head of neuraminidase. Intrachain disulfides connect cysteine 92–cysteine 417, cysteine 124–cysteine 129, cysteine 184–cysteine 231, cysteine 233–cysteine 238, cysteine 279–cysteine 292, cysteine 281–cysteine 290, cysteine 318–cysteine 335, and cysteine 421–cysteine 446. A substrate-binding site is contributed by arginine 118. N-linked (GlcNAc...) asparagine; by host glycosylation occurs at asparagine 146. Aspartate 151 serves as the catalytic Proton donor/acceptor. Arginine 152 contacts substrate. Asparagine 235 is a glycosylation site (N-linked (GlcNAc...) asparagine; by host). Glutamate 277–glutamate 278 serves as a coordination point for substrate. Residue arginine 293 coordinates substrate. Residues aspartate 294, glycine 298, aspartate 324, and asparagine 344 each contribute to the Ca(2+) site. Asparagine 365 carries N-linked (GlcNAc...) asparagine; by host glycosylation. Arginine 368 contributes to the substrate binding site. Tyrosine 402 functions as the Nucleophile in the catalytic mechanism.

It belongs to the glycosyl hydrolase 34 family. In terms of assembly, homotetramer. It depends on Ca(2+) as a cofactor. In terms of processing, N-glycosylated.

It localises to the virion membrane. The protein resides in the host apical cell membrane. The catalysed reaction is Hydrolysis of alpha-(2-&gt;3)-, alpha-(2-&gt;6)-, alpha-(2-&gt;8)- glycosidic linkages of terminal sialic acid residues in oligosaccharides, glycoproteins, glycolipids, colominic acid and synthetic substrates.. Its activity is regulated as follows. Inhibited by the neuraminidase inhibitors zanamivir (Relenza) and oseltamivir (Tamiflu). These drugs interfere with the release of progeny virus from infected cells and are effective against all influenza strains. Resistance to neuraminidase inhibitors is quite rare. In terms of biological role, catalyzes the removal of terminal sialic acid residues from viral and cellular glycoconjugates. Cleaves off the terminal sialic acids on the glycosylated HA during virus budding to facilitate virus release. Additionally helps virus spread through the circulation by further removing sialic acids from the cell surface. These cleavages prevent self-aggregation and ensure the efficient spread of the progeny virus from cell to cell. Otherwise, infection would be limited to one round of replication. Described as a receptor-destroying enzyme because it cleaves a terminal sialic acid from the cellular receptors. May facilitate viral invasion of the upper airways by cleaving the sialic acid moieties on the mucin of the airway epithelial cells. Likely to plays a role in the budding process through its association with lipid rafts during intracellular transport. May additionally display a raft-association independent effect on budding. Plays a role in the determination of host range restriction on replication and virulence. Sialidase activity in late endosome/lysosome traffic seems to enhance virus replication. The chain is Neuraminidase from Aves (Human).